The following is a 129-amino-acid chain: Methylmalonyl-CoA decarboxylase subunit gamma (129 aa).

Low complexity-rich tracts occupy residues 24–39 (APAA…APAP) and 49–58 (PAAAAAPVPA). Positions 24-58 (APAAAPKAAPAAAPAPKAAPAPAPAPAAAAAPVPA) are disordered. The region spanning 51–129 (AAAAPVPAGA…STGDDMVVLG (79 aa)) is the Biotinyl-binding domain. An N6-biotinyllysine modification is found at lysine 95.

In terms of assembly, the methylmalonyl-CoA decarboxylase is composed of five subunits: the carboxyltransferase alpha subunit (MmdA), the tunnel beta subunit (MmdB), the biotin-containing gamma subunit (MmdC), and the delta (MmdD) and epsilon (MmdE) subunits. Requires biotin as cofactor.

The protein localises to the cell membrane. The enzyme catalyses (S)-methylmalonyl-CoA + Na(+)(in) + H(+)(out) = propanoyl-CoA + Na(+)(out) + CO2. With respect to regulation, completely inhibited by avidin. In terms of biological role, biotin-containing subunit of the sodium ion pump methylmalonyl-CoA decarboxylase, which converts the chemical energy of a decarboxylation reaction into an electrochemical gradient of Na(+) ions across the cytoplasmic membrane, thereby creating a sodium ion motive force that is used for ATP synthesis. Can also convert malonyl-CoA into acetyl-CoA. This Veillonella parvula (Staphylococcus parvulus) protein is Methylmalonyl-CoA decarboxylase subunit gamma.